We begin with the raw amino-acid sequence, 338 residues long: DNA-directed RNA polymerase subunit alpha (338 aa).

An alpha N-terminal domain (alpha-NTD) region spans residues 1–225; that stretch reads MLISQRPTIT…ELFGLARELN (225 aa). Positions 242-338 are alpha C-terminal domain (alpha-CTD); it reads YIAAYSMPIE…YIDVEAEDSE (97 aa). The disordered stretch occupies residues 319 to 338; sequence LEGYDAETGGYIDVEAEDSE.

It belongs to the RNA polymerase alpha chain family. Homodimer. The RNAP catalytic core consists of 2 alpha, 1 beta, 1 beta' and 1 omega subunit. When a sigma factor is associated with the core the holoenzyme is formed, which can initiate transcription.

It carries out the reaction RNA(n) + a ribonucleoside 5'-triphosphate = RNA(n+1) + diphosphate. In terms of biological role, DNA-dependent RNA polymerase catalyzes the transcription of DNA into RNA using the four ribonucleoside triphosphates as substrates. This Corynebacterium glutamicum (strain ATCC 13032 / DSM 20300 / JCM 1318 / BCRC 11384 / CCUG 27702 / LMG 3730 / NBRC 12168 / NCIMB 10025 / NRRL B-2784 / 534) protein is DNA-directed RNA polymerase subunit alpha.